The following is a 565-amino-acid chain: E3 ubiquitin-protein ligase ipaH7.8 (565 aa).

The disordered stretch occupies residues 1-22 (MFSVNNTHSSVSCSPSINSNST). The interaction with target proteins stretch occupies residues 1-262 (MFSVNNTHSS…YHGPQIYFSM (262 aa)). A compositionally biased stretch (low complexity) spans 9 to 22 (SSVSCSPSINSNST). LRR repeat units lie at residues 58–79 (QEAVLNLSDLNLTSLPELPKHI), 80–97 (SALIVENNKLTSLPKLPA), 98–119 (FLKELNADNNRLSVIPELPESL), 120–137 (TTLSVRSNQLENLPVLPN), 138–157 (HLTSLFVENNRLYNLPALPE), 158–179 (KLKFLHVYYNRLTTLPDLPDKL), 180–199 (EILCAQRNNLVTFPQFSDRN), 202–223 (RQKEYYFHFNQITTLPESFSQL), and 225–248 (SSYRINISGNPLSTRVLQSLQRLT). The segment at 263 to 270 (SDGQQNTL) is linker. The tract at residues 271–565 (HRPLADAVTA…SENGSRLHHS (295 aa)) is E3 ubiquitin-protein ligase catalytic domain. The NEL domain occupies 273–565 (PLADAVTAWF…SENGSRLHHS (293 aa)). The active-site Glycyl thioester intermediate is cysteine 357.

This sequence belongs to the LRR-containing bacterial E3 ligase family. Ubiquitinated in the presence of host E1 ubiquitin-activating enzyme, E2 ubiquitin-conjugating enzyme and ubiquitin.

It is found in the secreted. The protein resides in the host cytoplasm. The catalysed reaction is S-ubiquitinyl-[E2 ubiquitin-conjugating enzyme]-L-cysteine + [acceptor protein]-L-lysine = [E2 ubiquitin-conjugating enzyme]-L-cysteine + N(6)-ubiquitinyl-[acceptor protein]-L-lysine.. It functions in the pathway protein modification; protein ubiquitination. E3 ubiquitin ligase effector protein that interferes with host's innate immunity. Functions to alter host cell physiology and promote bacterial survival in host tissues. Catalyzes ubiquitination of human gasdermins GSDMB and GSDMD, promoting their degradation by the proteasome, thereby preventing cell death. In contrast, activates host cell pyroptosis in mouse cells: catalyzes ubiquitination of mouse Nlrp1b allele 1 protein, releasing the cleaved C-terminal part of Nlrp1b, which polymerizes and forms the Nlrp1b inflammasome followed by host cell pyroptosis. Does not catalyze ubiquitination of mouse GSDMD. The sequence is that of E3 ubiquitin-protein ligase ipaH7.8 from Shigella flexneri.